Here is a 191-residue protein sequence, read N- to C-terminus: MAKSVPAIFLDRDGTINVDHGYVHEIDNFEFIDGVIDAMRELKKMGFALVVVTNQSGIARGKFTEAQFETLTEWMDWSLADRDVDLDGIYYCPHHPQGSVEEFRQVCDCRKPHPGMLLSARDYLHIDMAASYMVGDKLEDMQAAVAANVGTKVLVRTGKPITPEAENAADWVLNSLADLPQAIKKQQKPAQ.

Aspartate 11 functions as the Nucleophile in the catalytic mechanism. Mg(2+) is bound by residues aspartate 11 and aspartate 13. Residues 11-13 (DRD), 19-22 (DHGY), and 53-56 (TNQS) contribute to the substrate site. The Proton donor role is filled by aspartate 13. The Zn(2+) site is built by cysteine 92, histidine 94, cysteine 107, and cysteine 109. 110-111 (RK) serves as a coordination point for substrate. The Mg(2+) site is built by aspartate 136 and lysine 137. Substrate is bound at residue lysine 137.

Belongs to the GmhB family. As to quaternary structure, monomer. The cofactor is Mg(2+). Zn(2+) serves as cofactor.

Its subcellular location is the cytoplasm. It catalyses the reaction D-glycero-beta-D-manno-heptose 1,7-bisphosphate + H2O = D-glycero-beta-D-manno-heptose 1-phosphate + phosphate. The protein operates within nucleotide-sugar biosynthesis; ADP-L-glycero-beta-D-manno-heptose biosynthesis; ADP-L-glycero-beta-D-manno-heptose from D-glycero-beta-D-manno-heptose 7-phosphate: step 2/4. Its pathway is bacterial outer membrane biogenesis; LPS core biosynthesis. In terms of biological role, converts the D-glycero-beta-D-manno-heptose 1,7-bisphosphate intermediate into D-glycero-beta-D-manno-heptose 1-phosphate by removing the phosphate group at the C-7 position. The protein is D-glycero-beta-D-manno-heptose-1,7-bisphosphate 7-phosphatase (gmhB) of Escherichia coli O157:H7.